A 361-amino-acid polypeptide reads, in one-letter code: Large ribosomal subunit protein mL45 (361 aa).

The protein belongs to the mitochondrion-specific ribosomal protein mL45 family.

It is found in the mitochondrion. The polypeptide is Large ribosomal subunit protein mL45 (mrpl-45) (Caenorhabditis briggsae).